We begin with the raw amino-acid sequence, 104 residues long: Integration host factor subunit beta (104 aa).

It belongs to the bacterial histone-like protein family. As to quaternary structure, heterodimer of an alpha and a beta chain.

In terms of biological role, this protein is one of the two subunits of integration host factor, a specific DNA-binding protein that functions in genetic recombination as well as in transcriptional and translational control. The chain is Integration host factor subunit beta from Chromobacterium violaceum (strain ATCC 12472 / DSM 30191 / JCM 1249 / CCUG 213 / NBRC 12614 / NCIMB 9131 / NCTC 9757 / MK).